The chain runs to 145 residues: 3-hydroxyacyl-[acyl-carrier-protein] dehydratase FabZ (145 aa).

The active site involves H47.

This sequence belongs to the thioester dehydratase family. FabZ subfamily.

It localises to the cytoplasm. It carries out the reaction a (3R)-hydroxyacyl-[ACP] = a (2E)-enoyl-[ACP] + H2O. Involved in unsaturated fatty acids biosynthesis. Catalyzes the dehydration of short chain beta-hydroxyacyl-ACPs and long chain saturated and unsaturated beta-hydroxyacyl-ACPs. The protein is 3-hydroxyacyl-[acyl-carrier-protein] dehydratase FabZ of Ruthia magnifica subsp. Calyptogena magnifica.